Consider the following 413-residue polypeptide: Peptidase T (413 aa).

His-81 is a Zn(2+) binding site. Residue Asp-83 is part of the active site. A Zn(2+)-binding site is contributed by Asp-143. Residue Glu-178 is the Proton acceptor of the active site. Glu-179, Asp-201, and His-383 together coordinate Zn(2+).

The protein belongs to the peptidase M20B family. Zn(2+) is required as a cofactor.

The protein resides in the cytoplasm. It catalyses the reaction Release of the N-terminal residue from a tripeptide.. Its function is as follows. Cleaves the N-terminal amino acid of tripeptides. The protein is Peptidase T of Lactococcus lactis subsp. cremoris (Streptococcus cremoris).